Reading from the N-terminus, the 159-residue chain is Urease subunit beta 2 (159 aa).

The disordered stretch occupies residues 1-24 (MAKEPTKAAHPQPEQTKTNHKAHR).

The protein belongs to the urease beta subunit family. As to quaternary structure, heterotrimer of UreA (gamma), UreB (beta) and UreC (alpha) subunits. Three heterotrimers associate to form the active enzyme.

It is found in the cytoplasm. It catalyses the reaction urea + 2 H2O + H(+) = hydrogencarbonate + 2 NH4(+). It participates in nitrogen metabolism; urea degradation; CO(2) and NH(3) from urea (urease route): step 1/1. Its function is as follows. Disrupting the ure2 operon has no effect on urease activity, or pathogen survival in BALB/c mice when inoculated by gavage, but confers slightly enhanced resistance to low pH killing in vitro. The sequence is that of Urease subunit beta 2 from Brucella suis biovar 1 (strain 1330).